The primary structure comprises 244 residues: Small ribosomal subunit protein eS4 (244 aa).

The S4 RNA-binding domain maps to 43-106 (LPLLLVVRDV…DENYLVLFDE (64 aa)).

Belongs to the eukaryotic ribosomal protein eS4 family.

The chain is Small ribosomal subunit protein eS4 from Methanococcus maripaludis (strain C7 / ATCC BAA-1331).